Here is a 548-residue protein sequence, read N- to C-terminus: Membrane protein insertase YidC (548 aa).

Helical transmembrane passes span 6–26 (NLIL…WESD), 357–377 (NWGV…FPLT), 424–444 (LGGC…YWAL), 455–475 (FALW…PILM), and 503–523 (PIIF…YWLV).

This sequence belongs to the OXA1/ALB3/YidC family. Type 1 subfamily. In terms of assembly, interacts with the Sec translocase complex via SecD. Specifically interacts with transmembrane segments of nascent integral membrane proteins during membrane integration.

The protein localises to the cell inner membrane. Functionally, required for the insertion and/or proper folding and/or complex formation of integral membrane proteins into the membrane. Involved in integration of membrane proteins that insert both dependently and independently of the Sec translocase complex, as well as at least some lipoproteins. Aids folding of multispanning membrane proteins. In Aeromonas hydrophila subsp. hydrophila (strain ATCC 7966 / DSM 30187 / BCRC 13018 / CCUG 14551 / JCM 1027 / KCTC 2358 / NCIMB 9240 / NCTC 8049), this protein is Membrane protein insertase YidC.